A 475-amino-acid chain; its full sequence is Putative amidase AmiD (475 aa).

Catalysis depends on charge relay system residues Lys-93 and Ser-166. The active-site Acyl-ester intermediate is the Ser-190.

Belongs to the amidase family.

It carries out the reaction a monocarboxylic acid amide + H2O = a monocarboxylate + NH4(+). The chain is Putative amidase AmiD (amiD) from Mycobacterium bovis (strain ATCC BAA-935 / AF2122/97).